We begin with the raw amino-acid sequence, 273 residues long: MVSKKTIEARKAYYNEDVVLSKEAHDFYHNLDKHGENHNLDKDNLKTIIFGSLDGIITIFAIVSGCVGAKITPTQVIIIGIGNLFANAISMGFSEYTSSTAQRDFMLAEKKREEWEIENCPSEEKQEMIDIYMNKYKFDSEDARNLVEITFRNKNFFLEHMMSEELGLIVTNEDKNECLKKGIIMFLSFAVFGIIPLSAYVAYTVFFGYTDYTTSFLVVFISTLTTLFILGLFKSQFTNQKPITCALYMVLNGMIAGMVPFLLGVVLKNNISE.

Over 1 to 47 (MVSKKTIEARKAYYNEDVVLSKEAHDFYHNLDKHGENHNLDKDNLKT) the chain is Cytoplasmic. A helical transmembrane segment spans residues 48-68 (IIFGSLDGIITIFAIVSGCVG). Over 69–75 (AKITPTQ) the chain is Vacuolar. A helical membrane pass occupies residues 76 to 96 (VIIIGIGNLFANAISMGFSEY). The Cytoplasmic segment spans residues 97 to 181 (TSSTAQRDFM…NEDKNECLKK (85 aa)). Residues Glu-113, Glu-116, Glu-124, Glu-127, Met-161, and Glu-165 each coordinate Fe cation. The chain crosses the membrane as a helical span at residues 182–202 (GIIMFLSFAVFGIIPLSAYVA). Over 203-212 (YTVFFGYTDY) the chain is Vacuolar. The chain crosses the membrane as a helical span at residues 213-233 (TTSFLVVFISTLTTLFILGLF). Residues 234-246 (KSQFTNQKPITCA) lie on the Cytoplasmic side of the membrane. The chain crosses the membrane as a helical span at residues 247 to 267 (LYMVLNGMIAGMVPFLLGVVL). The Vacuolar portion of the chain corresponds to 268–273 (KNNISE).

It belongs to the CCC1 family. Monomer.

The protein resides in the vacuole membrane. Its subcellular location is the endoplasmic reticulum membrane. The protein localises to the cytoplasmic vesicle membrane. The catalysed reaction is Fe(2+)(in) = Fe(2+)(out). Functionally, vacuolar iron transporter involved in the transfer of iron ions from the cytosol to the vacuole for intracellular iron storage. Involved in detoxification of excess iron. The transport mechanism is not well defined and the role of protons is not clear. The protein is Vacuolar iron transporter of Plasmodium falciparum (isolate 3D7).